We begin with the raw amino-acid sequence, 512 residues long: Histidine ammonia-lyase (512 aa).

The segment at residues 142-144 is a cross-link (5-imidazolinone (Ala-Gly)); sequence ASG. Ser-143 bears the 2,3-didehydroalanine (Ser) mark.

Belongs to the PAL/histidase family. Contains an active site 4-methylidene-imidazol-5-one (MIO), which is formed autocatalytically by cyclization and dehydration of residues Ala-Ser-Gly.

The protein localises to the cytoplasm. The enzyme catalyses L-histidine = trans-urocanate + NH4(+). Its pathway is amino-acid degradation; L-histidine degradation into L-glutamate; N-formimidoyl-L-glutamate from L-histidine: step 1/3. This is Histidine ammonia-lyase from Bartonella quintana (strain Toulouse) (Rochalimaea quintana).